The primary structure comprises 160 residues: S-ribosylhomocysteine lyase (160 aa).

Fe cation contacts are provided by His-57, His-61, and Cys-127.

This sequence belongs to the LuxS family. As to quaternary structure, homodimer. The cofactor is Fe cation.

It catalyses the reaction S-(5-deoxy-D-ribos-5-yl)-L-homocysteine = (S)-4,5-dihydroxypentane-2,3-dione + L-homocysteine. Its function is as follows. Involved in the synthesis of autoinducer 2 (AI-2) which is secreted by bacteria and is used to communicate both the cell density and the metabolic potential of the environment. The regulation of gene expression in response to changes in cell density is called quorum sensing. Catalyzes the transformation of S-ribosylhomocysteine (RHC) to homocysteine (HC) and 4,5-dihydroxy-2,3-pentadione (DPD). The polypeptide is S-ribosylhomocysteine lyase (Streptococcus gordonii (strain Challis / ATCC 35105 / BCRC 15272 / CH1 / DL1 / V288)).